The sequence spans 466 residues: F-box/WD repeat-containing protein 15 (466 aa).

In terms of domain architecture, F-box spans 1–45 (MAIHLPCLPMMKILSYLDAYSLLQAAQVNKDWNELASSDVLWRKL). WD repeat units follow at residues 101 to 143 (GYAC…ITWK), 146 to 185 (EQPA…ALAT), 187 to 228 (NLKS…LIST), 339 to 379 (LQCH…KTFQ), and 381 to 419 (CPEM…LRKC).

As to quaternary structure, part of an SCF (SKP1-CUL1-F-box protein) E3 ubiquitin-protein ligase complex. Interacts with KAT7 and SKP1. Specifically expressed in oocytes from follicles of the medullary region of the ovary.

It localises to the cytoplasm. It is found in the cytosol. The protein localises to the endoplasmic reticulum. The protein resides in the nucleus. Its pathway is protein modification; protein ubiquitination. In terms of biological role, substrate-recognition component of an SCF (SKP1-CUL1-F-box protein)-type E3 ubiquitin ligase complex. Promotes KAT7 ubiquitination and subsequent degradation in collaboration with MAP2K1 kinase, leading to reduced histone H3K14 acetylation and increased cell proliferation. This chain is F-box/WD repeat-containing protein 15, found in Mus musculus (Mouse).